We begin with the raw amino-acid sequence, 100 residues long: Large ribosomal subunit protein bL27 (100 aa).

Residues 1-9 constitute a propeptide that is removed on maturation; sequence MLVMNLQLF.

This sequence belongs to the bacterial ribosomal protein bL27 family. The N-terminus is cleaved by ribosomal processing cysteine protease Prp.

The protein is Large ribosomal subunit protein bL27 of Clostridium botulinum (strain 657 / Type Ba4).